We begin with the raw amino-acid sequence, 295 residues long: Protease HtpX (295 aa).

2 consecutive transmembrane segments (helical) span residues 4–24 and 41–61; these read ILLF…TLSL and SSLL…SLFI. Residue histidine 147 coordinates Zn(2+). Glutamate 148 is a catalytic residue. Position 151 (histidine 151) interacts with Zn(2+). The next 2 helical transmembrane spans lie at 158–178 and 199–219; these read VTLA…ARII and VATI…VMWF. Glutamate 224 is a Zn(2+) binding site.

It belongs to the peptidase M48B family. Zn(2+) is required as a cofactor.

The protein resides in the cell inner membrane. This chain is Protease HtpX, found in Pseudomonas putida (strain ATCC 700007 / DSM 6899 / JCM 31910 / BCRC 17059 / LMG 24140 / F1).